The chain runs to 333 residues: DNA-directed RNA polymerase subunit alpha (333 aa).

The segment at 1 to 234 (MQISVNEFLT…QQLAAFVDLK (234 aa)) is alpha N-terminal domain (alpha-NTD). An alpha C-terminal domain (alpha-CTD) region spans residues 248 to 333 (IDPILLRPVD…SLKKDDKATA (86 aa)).

It belongs to the RNA polymerase alpha chain family. As to quaternary structure, homodimer. The RNAP catalytic core consists of 2 alpha, 1 beta, 1 beta' and 1 omega subunit. When a sigma factor is associated with the core the holoenzyme is formed, which can initiate transcription.

It carries out the reaction RNA(n) + a ribonucleoside 5'-triphosphate = RNA(n+1) + diphosphate. In terms of biological role, DNA-dependent RNA polymerase catalyzes the transcription of DNA into RNA using the four ribonucleoside triphosphates as substrates. The protein is DNA-directed RNA polymerase subunit alpha of Pseudomonas fluorescens (strain ATCC BAA-477 / NRRL B-23932 / Pf-5).